Reading from the N-terminus, the 290-residue chain is tRNA-cytidine(32) 2-sulfurtransferase (290 aa).

The PP-loop motif motif lies at 36–41 (SGGKDS). Residues cysteine 111, cysteine 114, and cysteine 202 each coordinate [4Fe-4S] cluster. The segment at 259–290 (DPWLDAEDEEAEDCGEPAGDGVVSLGGARGGR) is disordered. A compositionally biased stretch (acidic residues) spans 262–273 (LDAEDEEAEDCG).

Belongs to the TtcA family. In terms of assembly, homodimer. Mg(2+) serves as cofactor. The cofactor is [4Fe-4S] cluster.

The protein localises to the cytoplasm. It carries out the reaction cytidine(32) in tRNA + S-sulfanyl-L-cysteinyl-[cysteine desulfurase] + AH2 + ATP = 2-thiocytidine(32) in tRNA + L-cysteinyl-[cysteine desulfurase] + A + AMP + diphosphate + H(+). It participates in tRNA modification. In terms of biological role, catalyzes the ATP-dependent 2-thiolation of cytidine in position 32 of tRNA, to form 2-thiocytidine (s(2)C32). The sulfur atoms are provided by the cysteine/cysteine desulfurase (IscS) system. The chain is tRNA-cytidine(32) 2-sulfurtransferase from Anaeromyxobacter dehalogenans (strain 2CP-C).